Consider the following 140-residue polypeptide: Cysteine desulfuration protein SufE (140 aa).

C51 serves as the catalytic Cysteine persulfide intermediate.

Belongs to the SufE family. In terms of assembly, homodimer. Interacts with SufS.

The protein resides in the cytoplasm. It participates in cofactor biosynthesis; iron-sulfur cluster biosynthesis. Participates in cysteine desulfuration mediated by SufS. Cysteine desulfuration mobilizes sulfur from L-cysteine to yield L-alanine and constitutes an essential step in sulfur metabolism for biosynthesis of a variety of sulfur-containing biomolecules. Functions as a sulfur acceptor for SufS, by mediating the direct transfer of the sulfur atom from the S-sulfanylcysteine of SufS, an intermediate product of cysteine desulfuration process. The protein is Cysteine desulfuration protein SufE of Yersinia enterocolitica serotype O:8 / biotype 1B (strain NCTC 13174 / 8081).